The chain runs to 467 residues: Glutamate--tRNA ligase (467 aa).

Residues 14–24 (PSPTGFLHLGG) carry the 'HIGH' region motif. Positions 124 to 134 (PRYDGTWRPEP) are enriched in basic and acidic residues. The disordered stretch occupies residues 124 to 156 (PRYDGTWRPEPGKTLPPVPAGRKPVVRFKNPQD). Residues 246–250 (KLSKR) carry the 'KMSKS' region motif. Lys249 lines the ATP pocket.

The protein belongs to the class-I aminoacyl-tRNA synthetase family. Glutamate--tRNA ligase type 1 subfamily. As to quaternary structure, monomer.

The protein localises to the cytoplasm. It carries out the reaction tRNA(Glu) + L-glutamate + ATP = L-glutamyl-tRNA(Glu) + AMP + diphosphate. Catalyzes the attachment of glutamate to tRNA(Glu) in a two-step reaction: glutamate is first activated by ATP to form Glu-AMP and then transferred to the acceptor end of tRNA(Glu). The chain is Glutamate--tRNA ligase from Bordetella petrii (strain ATCC BAA-461 / DSM 12804 / CCUG 43448).